Reading from the N-terminus, the 341-residue chain is tRNA N6-adenosine threonylcarbamoyltransferase (341 aa).

Fe cation contacts are provided by His-115 and His-119. Residues 138–142 (LVSGG), Asp-171, Gly-184, and Asn-276 contribute to the substrate site. Fe cation is bound at residue Asp-304.

It belongs to the KAE1 / TsaD family. It depends on Fe(2+) as a cofactor.

It localises to the cytoplasm. It catalyses the reaction L-threonylcarbamoyladenylate + adenosine(37) in tRNA = N(6)-L-threonylcarbamoyladenosine(37) in tRNA + AMP + H(+). Required for the formation of a threonylcarbamoyl group on adenosine at position 37 (t(6)A37) in tRNAs that read codons beginning with adenine. Is involved in the transfer of the threonylcarbamoyl moiety of threonylcarbamoyl-AMP (TC-AMP) to the N6 group of A37, together with TsaE and TsaB. TsaD likely plays a direct catalytic role in this reaction. The protein is tRNA N6-adenosine threonylcarbamoyltransferase of Stenotrophomonas maltophilia (strain K279a).